The primary structure comprises 370 residues: Glutamine synthetase (370 aa).

Ala2 is subject to N-acetylalanine. Position 5 is a phosphoserine (Ser5). One can recognise a GS beta-grasp domain in the interval 24 to 103 (IIAEYVWIDG…VLAACYNNDG (80 aa)). The region spanning 110–370 (HRHEAAKLFA…MTKEFERESS (261 aa)) is the GS catalytic domain. Residues Lys283, Lys324, and Lys363 each participate in a glycyl lysine isopeptide (Lys-Gly) (interchain with G-Cter in ubiquitin) cross-link.

Belongs to the glutamine synthetase family. In terms of assembly, homooctamer.

The protein resides in the cytoplasm. The catalysed reaction is L-glutamate + NH4(+) + ATP = L-glutamine + ADP + phosphate + H(+). The polypeptide is Glutamine synthetase (GLN1) (Saccharomyces cerevisiae (strain ATCC 204508 / S288c) (Baker's yeast)).